A 133-amino-acid polypeptide reads, in one-letter code: Ribosome-binding factor A (133 aa).

This sequence belongs to the RbfA family. As to quaternary structure, monomer. Binds 30S ribosomal subunits, but not 50S ribosomal subunits or 70S ribosomes.

It is found in the cytoplasm. One of several proteins that assist in the late maturation steps of the functional core of the 30S ribosomal subunit. Associates with free 30S ribosomal subunits (but not with 30S subunits that are part of 70S ribosomes or polysomes). Required for efficient processing of 16S rRNA. May interact with the 5'-terminal helix region of 16S rRNA. The polypeptide is Ribosome-binding factor A (Cytophaga hutchinsonii (strain ATCC 33406 / DSM 1761 / CIP 103989 / NBRC 15051 / NCIMB 9469 / D465)).